A 337-amino-acid polypeptide reads, in one-letter code: Probable RuBisCO transcriptional regulator (337 aa).

An HTH lysR-type domain is found at 6–63; it reads FTLDQLRILKAIAVEGSFKRAADSLYVSQPAVSLQVQNLERQLDVPLFDRGGRRAQLT. The segment at residues 23–42 is a DNA-binding region (H-T-H motif); that stretch reads FKRAADSLYVSQPAVSLQVQ.

It belongs to the LysR transcriptional regulatory family.

Trans-acting transcriptional regulator of RuBisCO genes (rbcL and rbcS) expression. This is Probable RuBisCO transcriptional regulator (rbcR) from Nostoc sp. (strain PCC 7120 / SAG 25.82 / UTEX 2576).